Reading from the N-terminus, the 555-residue chain is Hydroxylamine reductase (555 aa).

[4Fe-4S] cluster contacts are provided by Cys-3, Cys-6, Cys-18, and Cys-25. His-252, Glu-276, Cys-320, Cys-407, Cys-435, Cys-460, Glu-494, and Lys-496 together coordinate hybrid [4Fe-2O-2S] cluster. Residue Cys-407 is modified to Cysteine persulfide.

The protein belongs to the HCP family. It depends on [4Fe-4S] cluster as a cofactor. Hybrid [4Fe-2O-2S] cluster serves as cofactor.

It is found in the cytoplasm. It carries out the reaction A + NH4(+) + H2O = hydroxylamine + AH2 + H(+). In terms of biological role, catalyzes the reduction of hydroxylamine to form NH(3) and H(2)O. The polypeptide is Hydroxylamine reductase (Burkholderia ambifaria (strain MC40-6)).